We begin with the raw amino-acid sequence, 75 residues long: UPF0352 protein YejL (75 aa).

The protein belongs to the UPF0352 family.

The chain is UPF0352 protein YejL from Escherichia coli O127:H6 (strain E2348/69 / EPEC).